We begin with the raw amino-acid sequence, 217 residues long: Protein-L-isoaspartate O-methyltransferase (217 aa).

Residue Ser65 is part of the active site.

This sequence belongs to the methyltransferase superfamily. L-isoaspartyl/D-aspartyl protein methyltransferase family.

It is found in the cytoplasm. It catalyses the reaction [protein]-L-isoaspartate + S-adenosyl-L-methionine = [protein]-L-isoaspartate alpha-methyl ester + S-adenosyl-L-homocysteine. In terms of biological role, catalyzes the methyl esterification of L-isoaspartyl residues in peptides and proteins that result from spontaneous decomposition of normal L-aspartyl and L-asparaginyl residues. It plays a role in the repair and/or degradation of damaged proteins. This is Protein-L-isoaspartate O-methyltransferase from Chlorobium limicola (strain DSM 245 / NBRC 103803 / 6330).